The sequence spans 513 residues: Probable hydrolase YhcX (513 aa).

Residues 14–212 (MVIRNIEEKD…YATLMEWNNV (199 aa)) enclose the N-acetyltransferase domain. In terms of domain architecture, CN hydrolase spans 229 to 484 (VRICVIQYEM…EMVVIGDVDL (256 aa)). The active-site Proton acceptor is the E270. K345 serves as the catalytic Proton donor. The Nucleophile role is filled by C379.

Belongs to the carbon-nitrogen hydrolase superfamily. NIT1/NIT2 family.

The protein is Probable hydrolase YhcX (yhcX) of Bacillus subtilis (strain 168).